Here is a 418-residue protein sequence, read N- to C-terminus: Queuine tRNA-ribosyltransferase accessory subunit 2 (418 aa).

Cysteine 325, cysteine 327, cysteine 330, and histidine 356 together coordinate Zn(2+).

Belongs to the queuine tRNA-ribosyltransferase family. QTRT2 subfamily. As to quaternary structure, heterodimer of a catalytic subunit and an accessory subunit. Requires Zn(2+) as cofactor.

It localises to the cytoplasm. Its function is as follows. Non-catalytic subunit of the queuine tRNA-ribosyltransferase (TGT) that catalyzes the base-exchange of a guanine (G) residue with queuine (Q) at position 34 (anticodon wobble position) in tRNAs with GU(N) anticodons (tRNA-Asp, -Asn, -His and -Tyr), resulting in the hypermodified nucleoside queuosine (7-(((4,5-cis-dihydroxy-2-cyclopenten-1-yl)amino)methyl)-7-deazaguanosine). The chain is Queuine tRNA-ribosyltransferase accessory subunit 2 from Drosophila sechellia (Fruit fly).